A 694-amino-acid polypeptide reads, in one-letter code: Type VI secretion system spike protein VgrG2 (694 aa).

Belongs to the VgrG protein family.

It is found in the secreted. Part of the type VI secretion system specialized secretion system, which delivers several virulence factors in both prokaryotic and eukaryotic cells during infection. Forms the spike at the tip of the elongating tube formed by haemolysin co-regulated protein Hcp. Allows the delivery of the VasX antibacterial toxin to target cells where it exerts its toxicity. This is Type VI secretion system spike protein VgrG2 (vgrG2) from Vibrio cholerae serotype O1 (strain ATCC 39315 / El Tor Inaba N16961).